The chain runs to 655 residues: Probable inactive receptor kinase At1g48480 (655 aa).

Positions 1–32 (MRVFFFPNSSMAILSVFLSLLLLSLPLPSTQD) are cleaved as a signal peptide. LRR repeat units follow at residues 71–95 (SNRV…IFGN), 98–120 (QLRT…LSTS), 122–144 (NLRH…LFSL), 146–169 (HLVR…TNLT), 170–192 (KLKT…DLPL), and 194–215 (QFNV…RFES). The tract at residues 234 to 260 (EETVPSQPTSGGNRTPPSVEGSEEKKK) is disordered. Positions 237 to 249 (VPSQPTSGGNRTP) are enriched in polar residues. A helical membrane pass occupies residues 269 to 289 (IAGIVIGCVVGFALIVLILMV). A Protein kinase domain is found at 371 to 646 (RASAEVLGKG…RKMENLRPYS (276 aa)). Ser373 bears the Phosphoserine mark. 377-385 (LGKGTFGTA) provides a ligand contact to ATP. A Phosphothreonine modification is found at Thr394. Position 399 (Lys399) interacts with ATP. Ser450 carries the post-translational modification Phosphoserine. Phosphothreonine is present on Thr526. Ser546 is subject to Phosphoserine. Thr622 is subject to Phosphothreonine.

Belongs to the protein kinase superfamily. As to expression, highly expressed in seedlings and leaves. Lower expression in roots, stems, flowers and siliques. Detected in the vascular tissues of roots, in the trichomes of young rosettes leaves and hydathodes, in the floral abscission zones, in filament apex and stomata cells of anthers, in inflorescence stems and in sepals.

It is found in the cell membrane. The sequence is that of Probable inactive receptor kinase At1g48480 (RKL1) from Arabidopsis thaliana (Mouse-ear cress).